A 1982-amino-acid chain; its full sequence is Ras guanine nucleotide exchange factor V (1982 aa).

LRR repeat units follow at residues 1 to 26, 47 to 68, 69 to 94, 105 to 128, 130 to 151, 164 to 187, 188 to 210, 212 to 234, 236 to 257, 261 to 284, 286 to 307, 308 to 330, 331 to 352, 354 to 376, and 378 to 399; these read MGNINSICLNNNGKYRIDSISCSLEG, LTQLLIIRECKLKQIPVNITNL, SNLSELILSDNKLSQLPWSLPPPFKP, NENLVRLDLSNNRFTEFPSSVFVL, NLKQLILCNNQLTNMNVTLCGG, ACQLEELKLSNNNFTIFPSIIGDQ, LTTLKSLDLSGNTITSLPNSFSN, VSLTSLNLKSNKFTCFPPSLCTL, KLVHLNLSCNQILVSPSDHTLG, LPSLEKLELQHNRFAHFPMDILEI, SLRVLKLQDNDIDKIPDKIGNL, LNLNELFLSENKITQLPSTIGEL, INLRKLYLEYNKIGSLPQEFSK, SKLNILILHNNDLKFVPDQLHSL, and QLLRLSLDENQLSSSDQKLIKS. Residues 1–1831 lie on the Extracellular side of the membrane; the sequence is MGNINSICLN…IANAFYELRN (1831 aa). 3 disordered regions span residues 414-436, 457-532, and 615-654; these read YGSTMNGTGTTSSSGSASTSTHG, NQIN…NKKQ, and NNSGGGDSMNGSGGNINNSGGSGSGCGTISGSTTKQRRGS. Composition is skewed to low complexity over residues 415 to 436 and 457 to 495; these read GSTMNGTGTTSSSGSASTSTHG and NQINNNNNNNNNNNNNNNNNNNSSNNNSGTNSLSSTPNG. The stretch at 443–466 is one LRR 16 repeat; the sequence is DILLSSVTLNNSILNQINNNNNNN. Residues 506–520 show a composition bias toward polar residues; that stretch reads LTISRSLFRGNSSNL. A coiled-coil region spans residues 515 to 567; sequence GNSSNLESEKEDFINKKQQQQQQQQQQQQQQQQQQQQQQQQQQQQQQQQQQLG. An LRR 17 repeat occupies 592 to 615; that stretch reads EDDIQKMQLGLEALSNLETSIGSN. Over residues 616-642 the composition is skewed to gly residues; it reads NSGGGDSMNGSGGNINNSGGSGSGCGT. LRR repeat units lie at residues 657–684 and 773–796; these read LPPTNAFKLSPNVVSSSYNTLPASVMSG and HSNLSQSLSINNLAHRLPTSLSSS. Disordered stretches follow at residues 756 to 778 and 807 to 829; these read QSSTNSFLPPQHQHHHHHSNLSQ and LQFQQQQQHHHHNHNNHQNSNQP. The GBD/FH3 domain occupies 832-1236; that stretch reads TIVPSFSKFK…QIKYSIDRYG (405 aa). 4 LRR repeats span residues 979 to 1003, 1075 to 1100, 1239 to 1263, and 1689 to 1712; these read LLGILQFNLDNAQLQFDEEKVGYCL, SPYVPLVALLRNPIIEMPTKTTVFKI, VPAIGSLVLDGSILQSSGSQSRWVD, and VQNMPAQSIEDDGLKELTELFVDL. Positions 1595–1717 constitute an N-terminal Ras-GEF domain; sequence KDRRVSSVTL…LFVDLSTKSY (123 aa). The Ras-GEF domain occupies 1747–1974; it reads DEIEIARQLS…YEMSLSAEPR (228 aa). Residues 1832–1848 form a helical membrane-spanning segment; sequence YHLLMAIISGLNASPVL. Over 1849–1982 the chain is Cytoplasmic; the sequence is RLKYTKGKLS…PRNAERYDIQ (134 aa). LRR repeat units lie at residues 1865 to 1888 and 1917 to 1941; these read LDTLEELMSTQSSMKNYRADLAAA and RINFKKLEMYKKTIATLQNFSLFPY.

Its subcellular location is the membrane. Its function is as follows. Promotes the exchange of Ras-bound GDP by GTP. This chain is Ras guanine nucleotide exchange factor V (gefV), found in Dictyostelium discoideum (Social amoeba).